Consider the following 218-residue polypeptide: Ras-related protein RABE1e (218 aa).

Gly-22 to Ser-29 is a binding site for GTP. The Effector region motif lies at Phe-44–Phe-52. Residues Asp-70–Gln-74, Asn-128–Asp-131, and Ser-159–Ala-160 each bind GTP. The disordered stretch occupies residues Thr-182 to Val-218. Over residues Asn-201 to Lys-211 the composition is skewed to polar residues. 2 S-geranylgeranyl cysteine lipidation sites follow: Cys-214 and Cys-215.

The protein belongs to the small GTPase superfamily. Rab family. In terms of assembly, interacts with PI5K2.

It localises to the golgi apparatus membrane. The protein resides in the cell membrane. Involved in membrane trafficking from the Golgi to the plasma membrane. The polypeptide is Ras-related protein RABE1e (RABE1E) (Arabidopsis thaliana (Mouse-ear cress)).